Consider the following 498-residue polypeptide: ATP synthase subunit beta, chloroplastic (498 aa).

172 to 179 (GGAGVGKT) serves as a coordination point for ATP.

This sequence belongs to the ATPase alpha/beta chains family. In terms of assembly, F-type ATPases have 2 components, CF(1) - the catalytic core - and CF(0) - the membrane proton channel. CF(1) has five subunits: alpha(3), beta(3), gamma(1), delta(1), epsilon(1). CF(0) has four main subunits: a(1), b(1), b'(1) and c(9-12).

It is found in the plastid. The protein resides in the chloroplast thylakoid membrane. It catalyses the reaction ATP + H2O + 4 H(+)(in) = ADP + phosphate + 5 H(+)(out). In terms of biological role, produces ATP from ADP in the presence of a proton gradient across the membrane. The catalytic sites are hosted primarily by the beta subunits. In Lemna minor (Common duckweed), this protein is ATP synthase subunit beta, chloroplastic.